Here is a 255-residue protein sequence, read N- to C-terminus: Homeobox-leucine zipper protein ATHB-23 (255 aa).

Positions 68–127 form a DNA-binding region, homeobox; the sequence is MGEKKRRLNMEQLKALEKDFELGNKLESDRKLELARALGLQPRQIAIWFQNRRARSKTKQ. A leucine-zipper region spans residues 128–163; it reads LEKDYDMLKRQFESLRDENEVLQTQNQKLQAQVMAL.

Belongs to the HD-ZIP homeobox family. Class I subfamily. In terms of tissue distribution, expressed in young leaves, in the adaxial domain of leaf primordia and the rib meristem. Expressed in the styles of flowers and siliques.

Its subcellular location is the nucleus. In terms of biological role, probable transcription factor. This Arabidopsis thaliana (Mouse-ear cress) protein is Homeobox-leucine zipper protein ATHB-23 (ATHB-23).